A 157-amino-acid polypeptide reads, in one-letter code: MTIKLVCIGKTDKKELEALIKIYSDRLQHYIKFEFEIIPDLKKTKNLDENQQKSKEGELILSGVQNSDFVVLLDENGKQFSSESFSEYIQKRMNTGLKRLIFVIGGPYGFSEEVYKRADSKISLSKMTFSHQMVRLFFTEQLYRAFTILKNEPYHHR.

S-adenosyl-L-methionine contacts are provided by residues Leu-73, Gly-105, and Leu-124 to Phe-129.

Belongs to the RNA methyltransferase RlmH family. Homodimer.

The protein resides in the cytoplasm. It catalyses the reaction pseudouridine(1915) in 23S rRNA + S-adenosyl-L-methionine = N(3)-methylpseudouridine(1915) in 23S rRNA + S-adenosyl-L-homocysteine + H(+). Specifically methylates the pseudouridine at position 1915 (m3Psi1915) in 23S rRNA. This is Ribosomal RNA large subunit methyltransferase H from Christiangramia forsetii (strain DSM 17595 / CGMCC 1.15422 / KT0803) (Gramella forsetii).